The chain runs to 122 residues: Large ribosomal subunit protein bL12 (122 aa).

The protein belongs to the bacterial ribosomal protein bL12 family. As to quaternary structure, homodimer. Part of the ribosomal stalk of the 50S ribosomal subunit. Forms a multimeric L10(L12)X complex, where L10 forms an elongated spine to which 2 to 4 L12 dimers bind in a sequential fashion. Binds GTP-bound translation factors.

Functionally, forms part of the ribosomal stalk which helps the ribosome interact with GTP-bound translation factors. Is thus essential for accurate translation. This is Large ribosomal subunit protein bL12 from Xanthomonas oryzae pv. oryzae (strain MAFF 311018).